The primary structure comprises 235 residues: MIYLKKSFNSTIKVKEMAPEERPREKMLAKGVKSLSNAELLAILLRTGNKNKNAIELANYIINRDIQGIRHLEDMTIEELCNIDGIGLSKSTQIKAALELGSRVASFKPIKYKIMNPWDIQRYYMDSLRYLKKEVFKAVLLNTKNEIISDVDVSIGTLSSSLVHPREVFKEAIRRSASKIIVMHNHPSGSVEPSREDKNITSRLIKCGEIIGIEIIDHIIIGDGLYFSFKENMII.

Positions Lys113–Ile235 constitute an MPN domain. Zn(2+)-binding residues include His184, His186, and Asp197. The JAMM motif signature appears at His184–Asp197.

This sequence belongs to the UPF0758 family.

The protein is UPF0758 protein CD630_11440 of Clostridioides difficile (strain 630) (Peptoclostridium difficile).